A 272-amino-acid polypeptide reads, in one-letter code: Transcription factor E2F6 (272 aa).

Positions 1–62 (MSQQRTARRQ…MRKALKVKRP (62 aa)) are binding to corepressors. Residues 50-129 (YVSMRKALKV…SKNHIRWIGS (80 aa)) mediate DNA binding. Residues 95 to 129 (KLGVRKRRVYDITNVLDGIELVEKKSKNHIRWIGS) carry the DEF box motif. The interval 130-222 (DLNNFGAAPQ…PAPREDSITV (93 aa)) is dimerization. The leucine-zipper stretch occupies residues 143-164 (LQAELSDLSAMEDALDELIKDC). A transcription repression region spans residues 173–272 (DDKENERLAY…CPEKEDEPPQ (100 aa)). The tract at residues 242-272 (HSNGKTNDGIGASPSKSSHPQCPEKEDEPPQ) is disordered.

It belongs to the E2F/DP family. Forms heterodimers with DP family members TFDP1 or TFDP2. Component of the DRTF1/E2F transcription factor complex. Part of the E2F6.com-1 complex in G0 phase composed of E2F6, MGA, MAX, TFDP1, CBX3, BAT8, EUHMTASE1, RING1, RNF2, MBLR, L3MBTL2 and YAF2. Component of some MLL1/MLL complex, at least composed of the core components KMT2A/MLL1, ASH2L, HCFC1/HCF1, WDR5 and RBBP5, as well as the facultative components BACC1, CHD8, E2F6, HSP70, INO80C, KANSL1, LAS1L, MAX, MCRS1, MGA, KAT8/MOF, PELP1, PHF20, PRP31, RING2, RUVB1/TIP49A, RUVB2/TIP49B, SENP3, TAF1, TAF4, TAF6, TAF7, TAF9 and TEX10.

It is found in the nucleus. Inhibitor of E2F-dependent transcription. Binds DNA cooperatively with DP proteins through the E2 recognition site, 5'-TTTC[CG]CGC-3'. Has a preference for the 5'-TTTCCCGC-3' E2F recognition site. E2F6 lacks the transcriptional activation and pocket protein binding domains. Appears to regulate a subset of E2F-dependent genes whose products are required for entry into the cell cycle but not for normal cell cycle progression. Represses expression of some meiosis-specific genes, including SLC25A31/ANT4. May silence expression via the recruitment of a chromatin remodeling complex containing histone H3-K9 methyltransferase activity. Overexpression delays the exit of cells from the S-phase. In Mus musculus (Mouse), this protein is Transcription factor E2F6.